A 260-amino-acid chain; its full sequence is NH(3)-dependent NAD(+) synthetase (260 aa).

An ATP-binding site is contributed by 31 to 38 (GLSGGLDS). Mg(2+) is bound at residue D37. R112 lines the deamido-NAD(+) pocket. T132 contacts ATP. E137 contacts Mg(2+). Positions 161 and 183 each coordinate ATP.

Belongs to the NAD synthetase family. In terms of assembly, homodimer.

The catalysed reaction is deamido-NAD(+) + NH4(+) + ATP = AMP + diphosphate + NAD(+) + H(+). It participates in cofactor biosynthesis; NAD(+) biosynthesis; NAD(+) from deamido-NAD(+) (ammonia route): step 1/1. Catalyzes the ATP-dependent amidation of deamido-NAD to form NAD. Uses ammonia as a nitrogen source. This is NH(3)-dependent NAD(+) synthetase from Helicobacter pylori (strain J99 / ATCC 700824) (Campylobacter pylori J99).